Here is a 194-residue protein sequence, read N- to C-terminus: Flagellar transcriptional regulator FlhC (194 aa).

The Zn(2+) site is built by cysteine 139, cysteine 142, cysteine 159, and cysteine 162.

Belongs to the FlhC family. Heterohexamer composed of two FlhC and four FlhD subunits. Each FlhC binds a FlhD dimer, forming a heterotrimer, and a hexamer assembles by dimerization of two heterotrimers. Zn(2+) serves as cofactor.

It localises to the cytoplasm. Functionally, functions in complex with FlhD as a master transcriptional regulator that regulates transcription of several flagellar and non-flagellar operons by binding to their promoter region. Activates expression of class 2 flagellar genes, including fliA, which is a flagellum-specific sigma factor that turns on the class 3 genes. Also regulates genes whose products function in a variety of physiological pathways. This Serratia marcescens protein is Flagellar transcriptional regulator FlhC.